Here is a 409-residue protein sequence, read N- to C-terminus: LL-diaminopimelate aminotransferase (409 aa).

Substrate contacts are provided by Tyr15 and Gly42. Residues Tyr72, 108–109 (AK), Tyr132, Asn186, Tyr217, and 245–247 (SFS) each bind pyridoxal 5'-phosphate. Residues Lys109, Tyr132, and Asn186 each contribute to the substrate site. Residue Lys248 is modified to N6-(pyridoxal phosphate)lysine. Residues Arg256 and Asn291 each coordinate pyridoxal 5'-phosphate. Substrate-binding residues include Asn291 and Arg385.

The protein belongs to the class-I pyridoxal-phosphate-dependent aminotransferase family. LL-diaminopimelate aminotransferase subfamily. In terms of assembly, homodimer. Requires pyridoxal 5'-phosphate as cofactor.

The catalysed reaction is (2S,6S)-2,6-diaminopimelate + 2-oxoglutarate = (S)-2,3,4,5-tetrahydrodipicolinate + L-glutamate + H2O + H(+). It participates in amino-acid biosynthesis; L-lysine biosynthesis via DAP pathway; LL-2,6-diaminopimelate from (S)-tetrahydrodipicolinate (aminotransferase route): step 1/1. Functionally, involved in the synthesis of meso-diaminopimelate (m-DAP or DL-DAP), required for both lysine and peptidoglycan biosynthesis. Catalyzes the direct conversion of tetrahydrodipicolinate to LL-diaminopimelate. In Desulfosudis oleivorans (strain DSM 6200 / JCM 39069 / Hxd3) (Desulfococcus oleovorans), this protein is LL-diaminopimelate aminotransferase.